A 115-amino-acid chain; its full sequence is Protein E6A (115 aa).

A signal peptide spans 1–25 (MTDKFYFYGLFWGILLFVFLQHMQG).

This chain is Protein E6A (12), found in Equine herpesvirus 2 (strain 86/87) (EHV-2).